A 224-amino-acid polypeptide reads, in one-letter code: Uracil-DNA glycosylase 2 (224 aa).

The active-site Proton acceptor is Asp-64.

It belongs to the uracil-DNA glycosylase (UDG) superfamily. UNG family.

It localises to the cytoplasm. The enzyme catalyses Hydrolyzes single-stranded DNA or mismatched double-stranded DNA and polynucleotides, releasing free uracil.. Functionally, excises uracil residues from the DNA which can arise as a result of misincorporation of dUMP residues by DNA polymerase or due to deamination of cytosine. In Listeria monocytogenes serovar 1/2a (strain ATCC BAA-679 / EGD-e), this protein is Uracil-DNA glycosylase 2.